We begin with the raw amino-acid sequence, 766 residues long: Subtilisin-like protease SBT4.15 (766 aa).

An N-terminal signal peptide occupies residues Met1–Ala23. The propeptide at Ala24–His113 is activation peptide. Residues Tyr35 to His113 form the Inhibitor I9 domain. One can recognise a Peptidase S8 domain in the interval Ser117–Ile601. Asp144 functions as the Charge relay system in the catalytic mechanism. An N-linked (GlcNAc...) asparagine glycan is attached at Asn175. Residue His210 is the Charge relay system of the active site. N-linked (GlcNAc...) asparagine glycans are attached at residues Asn233, Asn376, and Asn465. Positions Met365 to Ile460 constitute a PA domain. Residue Ser543 is the Charge relay system of the active site. N-linked (GlcNAc...) asparagine glycosylation is found at Asn624, Asn638, and Asn668.

It belongs to the peptidase S8 family. The C-terminal propeptide is autocleaved.

The protein localises to the secreted. The sequence is that of Subtilisin-like protease SBT4.15 from Arabidopsis thaliana (Mouse-ear cress).